A 181-amino-acid chain; its full sequence is Large ribosomal subunit protein uL5 (181 aa).

It belongs to the universal ribosomal protein uL5 family. As to quaternary structure, part of the 50S ribosomal subunit; part of the 5S rRNA/L5/L18/L25 subcomplex. Contacts the 5S rRNA and the P site tRNA. Forms a bridge to the 30S subunit in the 70S ribosome.

This is one of the proteins that bind and probably mediate the attachment of the 5S RNA into the large ribosomal subunit, where it forms part of the central protuberance. In the 70S ribosome it contacts protein S13 of the 30S subunit (bridge B1b), connecting the 2 subunits; this bridge is implicated in subunit movement. Contacts the P site tRNA; the 5S rRNA and some of its associated proteins might help stabilize positioning of ribosome-bound tRNAs. This is Large ribosomal subunit protein uL5 from Baumannia cicadellinicola subsp. Homalodisca coagulata.